The primary structure comprises 502 residues: Dipeptide and tripeptide permease A (502 aa).

The Cytoplasmic portion of the chain corresponds to methionine 1 to arginine 35. Residues phenylalanine 36–serine 56 traverse the membrane as a helical segment. At glutamate 57–serine 60 the chain is on the periplasmic side. A helical transmembrane segment spans residues isoleucine 61–leucine 81. The Cytoplasmic portion of the chain corresponds to glycine 82–arginine 90. Residues valine 91–histidine 111 traverse the membrane as a helical segment. Aspartate 112 is a topological domain (periplasmic). The chain crosses the membrane as a helical span at residues alanine 113 to asparagine 133. Residues proline 134 to threonine 154 lie on the Cytoplasmic side of the membrane. Residues methionine 155–alanine 175 form a helical membrane-spanning segment. Over alanine 176–glycine 179 the chain is Periplasmic. Residues tryptophan 180–phenylalanine 200 traverse the membrane as a helical segment. The Cytoplasmic portion of the chain corresponds to cysteine 201–histidine 218. A helical membrane pass occupies residues isoleucine 219–leucine 239. The Periplasmic portion of the chain corresponds to leucine 240–arginine 247. The helical transmembrane segment at alanine 248 to methionine 268 threads the bilayer. Residues glutamine 269–lysine 275 are Cytoplasmic-facing. A helical membrane pass occupies residues methionine 276 to methionine 296. The Periplasmic portion of the chain corresponds to proline 297–glutamine 321. The chain crosses the membrane as a helical span at residues phenylalanine 322–asparagine 342. Residues lysine 343 to lysine 353 lie on the Cytoplasmic side of the membrane. Residues phenylalanine 354–phenylalanine 374 traverse the membrane as a helical segment. Residues alanine 375–asparagine 384 are Periplasmic-facing. A helical membrane pass occupies residues tryptophan 385–leucine 405. Topologically, residues alanine 406–arginine 415 are cytoplasmic. The helical transmembrane segment at leucine 416–glycine 436 threads the bilayer. At lysine 437 to arginine 460 the chain is on the periplasmic side. The helical transmembrane segment at valine 461–proline 481 threads the bilayer. The Cytoplasmic segment spans residues lysine 482–alanine 502.

This sequence belongs to the major facilitator superfamily. Proton-dependent oligopeptide transporter (POT/PTR) (TC 2.A.17) family. DtpA subfamily.

It localises to the cell inner membrane. In terms of biological role, proton-dependent permease that transports di- and tripeptides. The protein is Dipeptide and tripeptide permease A of Enterobacter sp. (strain 638).